Reading from the N-terminus, the 362-residue chain is Cytochrome P450 monooxygenase-like protein avaN (362 aa).

Residues 3-23 traverse the membrane as a helical segment; it reads VILAIFIAAAGCLFSSWRIYW.

The protein belongs to the cytochrome P450 family.

The protein localises to the membrane. The protein operates within secondary metabolite biosynthesis. In terms of biological role, cytochrome P450 monooxygenase-like protein; part of the cluster that mediates the biosynthesis of a highly modified cyclo-arginine-tryptophan dipeptide (cRW). The first step of the pathway is perfornmed by the arginine-containing cyclodipeptide synthase (RCPDS) avaA that acts as the scaffold-generating enzyme and is responsible for formation of the cyclo-Arg-Trp (cRW) diketopiperazine. AvaB then acts as a multifunctional flavoenzyme that is responsible for generating the cyclo-Arg-formylkynurenine DKP, which can be deformylated by avaC. AvaB then further catalyzes an additional N-oxidation followed by cyclization and dehydration. The next step is an N-acetylation of the guanidine group catalyzed by the arginine N-acetyltransferase avaD. The roles of the additional enzymes identified within the ava cluster still have to be determined. This chain is Cytochrome P450 monooxygenase-like protein avaN, found in Aspergillus versicolor.